A 762-amino-acid chain; its full sequence is MWESESESHGGERGLVPVGGGGGSGRHEAALKNDGFVRRDRSWYVNSDIPSDLLVKVGDVNFYLHKYPMISRSGRMSRAVYESSAADEAEADAAAAVAVVEMGDLPGGAGSFELAARFSYGMAVDLTAANISGLRCAAEYLEMTEEMEEGNLIFKTEAFLSYVVLSSWRDSIAVLKSCEALSPWAENLQIVRRCSESIAWKACANPRGVRWAYTGAGAGSGGARGGPAAIRGGGGSGGTASPRWNVGGGGGGESKESSPSRQAVPPADWWFEDVSVLRIDHFVRVVTAIKVKGMRFDLIGAAITHYASKWLPGLTKDAPLGATHDEPWAQASAAGVGGGGLHMMIISGAGGGKDDVLAACSAPSREQRMVVESIISITPPQRDSVSCGFLLRLLRLAIMLRAAPALVTELEKRVGMQLEQAALADLLIPSYGGRAADTAYDVDLVQRLVEHFLVQEQTEMAVASSPGRGDPPPPPQPEYYSGRMPPSSAAAASASASTGGLNAKARVARLLDSYLSEVSRDRNLSLTKFQVLAESLPESARACDDGLYRAVDSYLKAHPTLTEHERKRLCRVMDCQKLSFDACMHAAQNERLPLRVVVQVLFTEQVKISNALASSSAALRSSSSAPGADAAPAMPTTRRQLLDGTPQSFQEGWAAAKKDINTLKFELESMKAKYLELQHEMDALQKQVDGRGGGAPSPAAAKIGKQQQQGTSASAWSSGWKKLGRLAKMSGADAAAGGGVAPPGGGEAAARKGPRRWRNSIS.

Over residues Met1–Glu12 the composition is skewed to basic and acidic residues. The disordered stretch occupies residues Met1 to Ala29. The 78-residue stretch at Ser51–Ala128 folds into the BTB domain. Residues Pro227–Gly238 are compositionally biased toward gly residues. Disordered stretches follow at residues Pro227–Val264, Met460–Ser495, Gln687–Ser718, and Gly731–Ser762. The NPH3 domain occupies Asp268–Lys607. Positions Ala654–Arg691 form a coiled coil. A compositionally biased stretch (low complexity) spans Pro696–Gln709. Positions Ala736–Glu747 are enriched in gly residues. The span at Lys752–Ser762 shows a compositional bias: basic residues.

It belongs to the NPH3 family.

The protein operates within protein modification; protein ubiquitination. May act as a substrate-specific adapter of an E3 ubiquitin-protein ligase complex (CUL3-RBX1-BTB) which mediates the ubiquitination and subsequent proteasomal degradation of target proteins. Plays a role as signal transduction component in coleoptile phototropism and lateral translocation of auxin. The protein is Coleoptile phototropism protein 1 (CPT1) of Oryza sativa subsp. japonica (Rice).